Consider the following 158-residue polypeptide: Adenosine 5'-monophosphoramidase HNT1 (158 aa).

The HIT domain maps to 26–129; the sequence is IFCKIIKSEI…IPKRDEKSGL (104 aa). AMP contacts are provided by residues 51-52, Asn103, 109-111, and 116-118; these read DI, HQE, and HFH. The Histidine triad motif signature appears at 114–118; the sequence is HVHFH. The Tele-AMP-histidine intermediate role is filled by His116.

Belongs to the HINT family. As to quaternary structure, homodimer. Interacts with KIN28. It depends on Mg(2+) as a cofactor.

It carries out the reaction adenosine 5'-phosphoramidate + H2O = AMP + NH4(+). Functionally, hydrolyzes adenosine 5'-monophosphoramidate substrates such as AMP-morpholidate, AMP-N-alanine methyl ester, AMP-alpha-acetyl lysine methyl ester and AMP-NH2. Plays a role in the regulation of kinase KIN28 function. Essential for growth on galactose media at elevated temperatures. This Saccharomyces cerevisiae (strain ATCC 204508 / S288c) (Baker's yeast) protein is Adenosine 5'-monophosphoramidase HNT1.